Consider the following 490-residue polypeptide: Tegument protein VP16 (490 aa).

Residues 12 to 35 are disordered; sequence MNADGASPPPPRPAGGPKNTPAAP. Ser-18, Ser-353, Ser-411, and Ser-452 each carry phosphoserine. A transcriptional activation region spans residues 411 to 490; it reads STAPPTDVSL…DALGIDEYGG (80 aa).

This sequence belongs to the herpesviridae tegument protein VP16 protein family. Interacts with tegument protein VP22. Interacts with gH (via C-terminus). Interacts with the virion host shutoff protein (vhs). Interacts with VP11/12. Associates with the VP16-induced complex; binding to host HCFC1 activates VP16 for association with the octamer motif-binding host protein POU2F1, to form a multiprotein-DNA complex responsible for activating transcription of the viral immediate early genes. Interacts with host P-TEFb; this interaction recruits P-TEFb to the viral alpha-gene promoters and overcomes transcriptional inhibition by ICP22 and promotes transcription of IE genes.

It is found in the virion tegument. The protein localises to the host nucleus. In the early stage of viral replication, acts as a transcriptional activator of immediate-early (IE) gene products (alpha-genes), which is released by invading virions. Recruits P-TEFb to the viral alpha-gene promoters and overcomes transcriptional inhibition by ICP22 to promote transcription of IE genes. VP16-induced complex represents a regulatory switch: when it is on, it promotes IE-gene expression and thus lytic infection, and when it is off, it limits IE-gene transcription favoring latent infection. Acts as a key activator of lytic infection by initiating the lytic program through the assembly of the transcriptional regulatory VP16-induced complex composed of VP16 and two cellular factors, HCFC1 and POU2F1. This complex recognizes the core motif 'TAATGARAT' in alpha-gene promoters. In the late stage of viral replication, VP16, as a tegument, is involved in viral assembly. In terms of biological role, may play a role in the aggregation of tegument proteins around nucleocapsids during virus morphogenesis. The polypeptide is Tegument protein VP16 (Human herpesvirus 1 (strain 17) (HHV-1)).